A 259-amino-acid chain; its full sequence is Phosphoribosylaminoimidazole-succinocarboxamide synthase (259 aa).

Belongs to the SAICAR synthetase family.

The catalysed reaction is 5-amino-1-(5-phospho-D-ribosyl)imidazole-4-carboxylate + L-aspartate + ATP = (2S)-2-[5-amino-1-(5-phospho-beta-D-ribosyl)imidazole-4-carboxamido]succinate + ADP + phosphate + 2 H(+). It functions in the pathway purine metabolism; IMP biosynthesis via de novo pathway; 5-amino-1-(5-phospho-D-ribosyl)imidazole-4-carboxamide from 5-amino-1-(5-phospho-D-ribosyl)imidazole-4-carboxylate: step 1/2. This is Phosphoribosylaminoimidazole-succinocarboxamide synthase from Hyphomonas neptunium (strain ATCC 15444).